The chain runs to 537 residues: Phenylalanine--tRNA ligase beta subunit (537 aa).

Residues 268–343 (FNFRPYRLNL…KSYGIENVRE (76 aa)) form the B5 domain. Asp321, Asp327, Glu330, and Asp331 together coordinate Mg(2+).

This sequence belongs to the phenylalanyl-tRNA synthetase beta subunit family. Type 2 subfamily. In terms of assembly, tetramer of two alpha and two beta subunits. The cofactor is Mg(2+).

The protein localises to the cytoplasm. The catalysed reaction is tRNA(Phe) + L-phenylalanine + ATP = L-phenylalanyl-tRNA(Phe) + AMP + diphosphate + H(+). The protein is Phenylalanine--tRNA ligase beta subunit of Thermoplasma volcanium (strain ATCC 51530 / DSM 4299 / JCM 9571 / NBRC 15438 / GSS1).